We begin with the raw amino-acid sequence, 82 residues long: MSRKRPQPPVKPFKKKPNPLKAAKVTEIDYKDVALLRKFISDRGKIRSRRITGVTVQEQRELSKAIKNAREMALLPYATSGR.

It belongs to the bacterial ribosomal protein bS18 family. As to quaternary structure, part of the 30S ribosomal subunit. Forms a tight heterodimer with protein bS6.

In terms of biological role, binds as a heterodimer with protein bS6 to the central domain of the 16S rRNA, where it helps stabilize the platform of the 30S subunit. This is Small ribosomal subunit protein bS18 from Bifidobacterium longum (strain NCC 2705).